The following is a 334-amino-acid chain: Aspartate carbamoyltransferase catalytic subunit (334 aa).

2 residues coordinate carbamoyl phosphate: Arg70 and Thr71. Lys98 is an L-aspartate binding site. Carbamoyl phosphate contacts are provided by Arg120, His150, and Gln153. The L-aspartate site is built by Arg183 and Arg239. The carbamoyl phosphate site is built by Gly280 and Pro281.

It belongs to the aspartate/ornithine carbamoyltransferase superfamily. ATCase family. Heterododecamer (2C3:3R2) of six catalytic PyrB chains organized as two trimers (C3), and six regulatory PyrI chains organized as three dimers (R2).

It carries out the reaction carbamoyl phosphate + L-aspartate = N-carbamoyl-L-aspartate + phosphate + H(+). It participates in pyrimidine metabolism; UMP biosynthesis via de novo pathway; (S)-dihydroorotate from bicarbonate: step 2/3. Its function is as follows. Catalyzes the condensation of carbamoyl phosphate and aspartate to form carbamoyl aspartate and inorganic phosphate, the committed step in the de novo pyrimidine nucleotide biosynthesis pathway. The chain is Aspartate carbamoyltransferase catalytic subunit from Pseudomonas paraeruginosa (strain DSM 24068 / PA7) (Pseudomonas aeruginosa (strain PA7)).